Reading from the N-terminus, the 112-residue chain is Mitochondrial import inner membrane translocase subunit TIM14-2 (112 aa).

A helical membrane pass occupies residues 7-25 (AGAAVAAAAYAGKYGIEAW). Residues 53-112 (EAALILGVRESVAAEKVKEAHRRVMVANHPDAGGSHYLASKINEAKDMMLGKTKNSGSAF) enclose the J domain.

The protein belongs to the TIM14 family. In terms of assembly, probable component of the PAM complex at least composed of a mitochondrial HSP70 protein, TIMM44 and TIMM14. The complex interacts with the TIMM23 component of the TIM17:23 complex.

The protein resides in the mitochondrion. The protein localises to the mitochondrion inner membrane. Its function is as follows. Component of the PAM complex, a complex required for the translocation of transit peptide-containing proteins from the inner membrane into the mitochondrial matrix in an ATP-dependent manner. The sequence is that of Mitochondrial import inner membrane translocase subunit TIM14-2 (TIM14-2) from Arabidopsis thaliana (Mouse-ear cress).